Consider the following 505-residue polypeptide: MEGGPAVCCQDPRAELVERVAAIDVTHLEEADGGPEPTRNGVDPPPRARAASVIPGSTSRLLPARPSLSARKLSLQERPAGSYLEAQAGPYATGPASHISPRAWRRPTIESHHVAISDAEDCVQLNQYKLQSEIGKGAYGVVRLAYNESEDRHYAMKVLSKKKLLKQYGFPRRPPPRGSQAAQGGPAKQLLPLERVYQEIAILKKLDHVNVVKLIEVLDDPAEDNLYLVFDLLRKGPVMEVPCDKPFSEEQARLYLRDVILGLEYLHCQKIVHRDIKPSNLLLGDDGHVKIADFGVSNQFEGNDAQLSSTAGTPAFMAPEAISDSGQSFSGKALDVWATGVTLYCFVYGKCPFIDDFILALHRKIKNEPVVFPEEPEISEELKDLILKMLDKNPETRIGVPDIKLHPWVTKNGEEPLPSEEEHCSVVEVTEEEVKNSVRLIPSWTTVILVKSMLRKRSFGNPFEPQARREERSMSAPGNLLVKEGFGEGGKSPELPGVQEDEAAS.

Residues 26–61 (THLEEADGGPEPTRNGVDPPPRARAASVIPGSTSRL) are disordered. A phosphoserine mark is found at serine 67 and serine 74. Arginine 78 is subject to Asymmetric dimethylarginine. Phosphoserine is present on serine 100. Phosphothreonine is present on threonine 108. The region spanning 128–409 (YKLQSEIGKG…VPDIKLHPWV (282 aa)) is the Protein kinase domain. Residues 134-142 (IGKGAYGVV) and lysine 157 each bind ATP. The segment at 167-189 (QYGFPRRPPPRGSQAAQGGPAKQ) is RP domain. Residue aspartate 275 is the Proton acceptor of the active site. Residues 435–440 (KNSVRL) form an autoinhibitory domain region. The tract at residues 438-463 (VRLIPSWTTVILVKSMLRKRSFGNPF) is calmodulin-binding. A phosphoserine mark is found at serine 458, serine 475, and serine 492. The disordered stretch occupies residues 460-505 (GNPFEPQARREERSMSAPGNLLVKEGFGEGGKSPELPGVQEDEAAS).

The protein belongs to the protein kinase superfamily. Ser/Thr protein kinase family. In terms of assembly, interacts with CAMK4 and calmodulin. In terms of processing, appears to be autophosphorylated in a Ca(2+)/calmodulin-dependent manner. Phosphorylated at multiple sites by PRCAKA/PKA. Phosphorylation of Ser-458 is blocked upon binding to Ca(2+)/calmodulin. In vitro, phosphorylated by CAMK1 and CAMK4.

The protein localises to the cytoplasm. It is found in the nucleus. The catalysed reaction is L-seryl-[protein] + ATP = O-phospho-L-seryl-[protein] + ADP + H(+). It carries out the reaction L-threonyl-[protein] + ATP = O-phospho-L-threonyl-[protein] + ADP + H(+). Its activity is regulated as follows. Activated by Ca(2+)/calmodulin. Binding of calmodulin may relieve intrasteric autoinhibition. Partially inhibited upon phosphorylation by PRCAKA/PKA. May be regulated through phosphorylation by CAMK1 and CAMK4. Functionally, calcium/calmodulin-dependent protein kinase that belongs to a proposed calcium-triggered signaling cascade involved in a number of cellular processes. Phosphorylates CAMK1, CAMK1D, CAMK1G and CAMK4. Involved in regulating cell apoptosis. Promotes cell survival by phosphorylating AKT1/PKB that inhibits pro-apoptotic BAD/Bcl2-antagonist of cell death. The chain is Calcium/calmodulin-dependent protein kinase kinase 1 (CAMKK1) from Homo sapiens (Human).